Here is a 205-residue protein sequence, read N- to C-terminus: ATP synthase subunit b (205 aa).

The helical transmembrane segment at 51 to 69 (FAWRCLDFAVLLAIVVWAL) threads the bilayer.

The protein belongs to the ATPase B chain family. As to quaternary structure, F-type ATPases have 2 components, F(1) - the catalytic core - and F(0) - the membrane proton channel. F(1) has five subunits: alpha(3), beta(3), gamma(1), delta(1), epsilon(1). F(0) has three main subunits: a(1), b(2) and c(10-14). The alpha and beta chains form an alternating ring which encloses part of the gamma chain. F(1) is attached to F(0) by a central stalk formed by the gamma and epsilon chains, while a peripheral stalk is formed by the delta and b chains.

The protein resides in the cell inner membrane. Its function is as follows. F(1)F(0) ATP synthase produces ATP from ADP in the presence of a proton or sodium gradient. F-type ATPases consist of two structural domains, F(1) containing the extramembraneous catalytic core and F(0) containing the membrane proton channel, linked together by a central stalk and a peripheral stalk. During catalysis, ATP synthesis in the catalytic domain of F(1) is coupled via a rotary mechanism of the central stalk subunits to proton translocation. Functionally, component of the F(0) channel, it forms part of the peripheral stalk, linking F(1) to F(0). This is ATP synthase subunit b from Geotalea uraniireducens (strain Rf4) (Geobacter uraniireducens).